A 402-amino-acid chain; its full sequence is tRNA(Met) cytidine acetate ligase (402 aa).

ATP is bound by residues 7 to 20 (ITEY…HELH), Gly102, Asn171, and Arg196.

Belongs to the TmcAL family.

The protein resides in the cytoplasm. It carries out the reaction cytidine(34) in elongator tRNA(Met) + acetate + ATP = N(4)-acetylcytidine(34) in elongator tRNA(Met) + AMP + diphosphate. Functionally, catalyzes the formation of N(4)-acetylcytidine (ac(4)C) at the wobble position of elongator tRNA(Met), using acetate and ATP as substrates. First activates an acetate ion to form acetyladenylate (Ac-AMP) and then transfers the acetyl group to tRNA to form ac(4)C34. The sequence is that of tRNA(Met) cytidine acetate ligase from Clostridium perfringens (strain SM101 / Type A).